The following is a 508-amino-acid chain: Sugar transport protein 12 (508 aa).

Residues Met-1–Tyr-22 are Cytoplasmic-facing. A run of 12 helical transmembrane segments spans residues Val-23–Ile-43, Val-80–Ala-100, Val-118–Val-138, Leu-141–Met-161, Ile-172–Phe-192, Leu-201–Pro-221, Leu-294–Gly-314, Ala-317–Ile-337, Phe-347–Ile-367, Trp-383–Trp-403, Ile-426–Leu-446, and Phe-451–Phe-471. Residues Leu-472 to Ile-508 are Cytoplasmic-facing.

The protein belongs to the major facilitator superfamily. Sugar transporter (TC 2.A.1.1) family.

The protein resides in the membrane. In terms of biological role, mediates an active uptake of hexoses, probably by sugar/hydrogen symport. The protein is Sugar transport protein 12 (STP12) of Arabidopsis thaliana (Mouse-ear cress).